The following is a 125-amino-acid chain: Holo-[acyl-carrier-protein] synthase (125 aa).

The Mg(2+) site is built by aspartate 8 and glutamate 57.

It belongs to the P-Pant transferase superfamily. AcpS family. Mg(2+) serves as cofactor.

Its subcellular location is the cytoplasm. The enzyme catalyses apo-[ACP] + CoA = holo-[ACP] + adenosine 3',5'-bisphosphate + H(+). Transfers the 4'-phosphopantetheine moiety from coenzyme A to a Ser of acyl-carrier-protein. This is Holo-[acyl-carrier-protein] synthase from Halothermothrix orenii (strain H 168 / OCM 544 / DSM 9562).